Here is a 61-residue protein sequence, read N- to C-terminus: Large ribosomal subunit protein uL30 (61 aa).

It belongs to the universal ribosomal protein uL30 family. Part of the 50S ribosomal subunit.

The chain is Large ribosomal subunit protein uL30 from Nitrosomonas europaea (strain ATCC 19718 / CIP 103999 / KCTC 2705 / NBRC 14298).